We begin with the raw amino-acid sequence, 440 residues long: Light-independent protochlorophyllide reductase subunit N (440 aa).

The segment at 1–24 is disordered; that stretch reads MTCRPALSDSHPPEPGTPSSPSFG. Residues C42, C67, and C128 each coordinate [4Fe-4S] cluster.

It belongs to the BchN/ChlN family. In terms of assembly, protochlorophyllide reductase is composed of three subunits; BchL, BchN and BchB. Forms a heterotetramer of two BchB and two BchN subunits. [4Fe-4S] cluster is required as a cofactor.

The catalysed reaction is chlorophyllide a + oxidized 2[4Fe-4S]-[ferredoxin] + 2 ADP + 2 phosphate = protochlorophyllide a + reduced 2[4Fe-4S]-[ferredoxin] + 2 ATP + 2 H2O. Its pathway is porphyrin-containing compound metabolism; bacteriochlorophyll biosynthesis (light-independent). In terms of biological role, component of the dark-operative protochlorophyllide reductase (DPOR) that uses Mg-ATP and reduced ferredoxin to reduce ring D of protochlorophyllide (Pchlide) to form chlorophyllide a (Chlide). This reaction is light-independent. The NB-protein (BchN-BchB) is the catalytic component of the complex. The polypeptide is Light-independent protochlorophyllide reductase subunit N (Rhodospirillum rubrum (strain ATCC 11170 / ATH 1.1.1 / DSM 467 / LMG 4362 / NCIMB 8255 / S1)).